The chain runs to 448 residues: Probable glycine dehydrogenase (decarboxylating) subunit 1 (448 aa).

The protein belongs to the GcvP family. N-terminal subunit subfamily. The glycine cleavage system is composed of four proteins: P, T, L and H. In this organism, the P 'protein' is a heterodimer of two subunits.

It carries out the reaction N(6)-[(R)-lipoyl]-L-lysyl-[glycine-cleavage complex H protein] + glycine + H(+) = N(6)-[(R)-S(8)-aminomethyldihydrolipoyl]-L-lysyl-[glycine-cleavage complex H protein] + CO2. In terms of biological role, the glycine cleavage system catalyzes the degradation of glycine. The P protein binds the alpha-amino group of glycine through its pyridoxal phosphate cofactor; CO(2) is released and the remaining methylamine moiety is then transferred to the lipoamide cofactor of the H protein. The polypeptide is Probable glycine dehydrogenase (decarboxylating) subunit 1 (gcvPA) (Bacillus subtilis (strain 168)).